Here is a 156-residue protein sequence, read N- to C-terminus: Arginine repressor (156 aa).

This sequence belongs to the ArgR family.

It localises to the cytoplasm. Its pathway is amino-acid biosynthesis; L-arginine biosynthesis [regulation]. Its function is as follows. Regulates arginine biosynthesis genes. The protein is Arginine repressor of Proteus mirabilis (strain HI4320).